Here is a 461-residue protein sequence, read N- to C-terminus: ATP synthase subunit beta (461 aa).

151 to 158 (GGAGVGKT) is a binding site for ATP.

It belongs to the ATPase alpha/beta chains family. As to quaternary structure, F-type ATPases have 2 components, CF(1) - the catalytic core - and CF(0) - the membrane proton channel. CF(1) has five subunits: alpha(3), beta(3), gamma(1), delta(1), epsilon(1). CF(0) has three main subunits: a(1), b(2) and c(9-12). The alpha and beta chains form an alternating ring which encloses part of the gamma chain. CF(1) is attached to CF(0) by a central stalk formed by the gamma and epsilon chains, while a peripheral stalk is formed by the delta and b chains.

Its subcellular location is the cell inner membrane. It carries out the reaction ATP + H2O + 4 H(+)(in) = ADP + phosphate + 5 H(+)(out). Functionally, produces ATP from ADP in the presence of a proton gradient across the membrane. The catalytic sites are hosted primarily by the beta subunits. In Alteromonas mediterranea (strain DSM 17117 / CIP 110805 / LMG 28347 / Deep ecotype), this protein is ATP synthase subunit beta.